Consider the following 763-residue polypeptide: Translation initiation factor IF-2 (763 aa).

Positions 52-178 (KQKKVQTSQN…KDEAIKHETK (127 aa)) are disordered. Residues 65–82 (SNDENKKITNKNTEKTTE) show a composition bias toward basic and acidic residues. The span at 86-96 (TVDSNKQNNSN) shows a compositional bias: polar residues. Basic and acidic residues-rich tracts occupy residues 105–116 (RNNDEESVSHFD) and 123–135 (KSEM…LNDK). Basic residues predominate over residues 136-145 (KKNKNFKNTK). Over residues 146–161 (NKNSNNNKNSKNNKNN) the composition is skewed to low complexity. The segment covering 162 to 178 (KNNDHNRKDEAIKHETK) has biased composition (basic and acidic residues). The 170-residue stretch at 265 to 434 (ERPPVITVMG…LMVAEMEELK (170 aa)) folds into the tr-type G domain. The tract at residues 274–281 (GHVDHGKT) is G1. 274-281 (GHVDHGKT) serves as a coordination point for GTP. Residues 299-303 (GITQH) form a G2 region. Residues 320-323 (DTPG) are G3. Residues 320-324 (DTPGH) and 374-377 (NKID) each bind GTP. The G4 stretch occupies residues 374–377 (NKID). The segment at 410 to 412 (SAR) is G5.

It belongs to the TRAFAC class translation factor GTPase superfamily. Classic translation factor GTPase family. IF-2 subfamily.

Its subcellular location is the cytoplasm. Its function is as follows. One of the essential components for the initiation of protein synthesis. Protects formylmethionyl-tRNA from spontaneous hydrolysis and promotes its binding to the 30S ribosomal subunits. Also involved in the hydrolysis of GTP during the formation of the 70S ribosomal complex. The chain is Translation initiation factor IF-2 from Finegoldia magna (strain ATCC 29328 / DSM 20472 / WAL 2508) (Peptostreptococcus magnus).